Here is a 420-residue protein sequence, read N- to C-terminus: Diphosphomevalonate decarboxylase 2 (420 aa).

(R)-5-diphosphomevalonate is bound at residue 25-28; the sequence is YWGK. Residues 42–50 carry the Peroxisomal targeting signal PTS2 motif; sequence SVTLDPDHL. Residues R80, 163-168, and T219 contribute to the (R)-5-diphosphomevalonate site; that span reads SGSACR.

The protein belongs to the diphosphomevalonate decarboxylase family. Homodimer.

It localises to the peroxisome. The catalysed reaction is (R)-5-diphosphomevalonate + ATP = isopentenyl diphosphate + ADP + phosphate + CO2. The protein operates within isoprenoid biosynthesis; isopentenyl diphosphate biosynthesis via mevalonate pathway; isopentenyl diphosphate from (R)-mevalonate: step 3/3. In terms of biological role, performs the first committed step in the biosynthesis of isoprene-containing compounds such as sterols and terpenoids. Component of the triterpenes (e.g. ginsenosides or panaxosides) and phytosterols biosynthetic pathways. Promotes the accumulation of stigmasterol and beta-sitosterol. This chain is Diphosphomevalonate decarboxylase 2, found in Panax ginseng (Korean ginseng).